A 320-amino-acid polypeptide reads, in one-letter code: Beta-ketoacyl-[acyl-carrier-protein] synthase III (320 aa).

Catalysis depends on residues Cys114 and His247. Residues 248–252 (QANRR) form an ACP-binding region. Residue Asn277 is part of the active site.

Belongs to the thiolase-like superfamily. FabH family. As to quaternary structure, homodimer.

The protein resides in the cytoplasm. The catalysed reaction is malonyl-[ACP] + acetyl-CoA + H(+) = 3-oxobutanoyl-[ACP] + CO2 + CoA. Its pathway is lipid metabolism; fatty acid biosynthesis. Functionally, catalyzes the condensation reaction of fatty acid synthesis by the addition to an acyl acceptor of two carbons from malonyl-ACP. Catalyzes the first condensation reaction which initiates fatty acid synthesis and may therefore play a role in governing the total rate of fatty acid production. Possesses both acetoacetyl-ACP synthase and acetyl transacylase activities. Its substrate specificity determines the biosynthesis of branched-chain and/or straight-chain of fatty acids. This Neisseria meningitidis serogroup A / serotype 4A (strain DSM 15465 / Z2491) protein is Beta-ketoacyl-[acyl-carrier-protein] synthase III.